A 321-amino-acid polypeptide reads, in one-letter code: Hydrolase 3 (321 aa).

The Involved in the stabilization of the negatively charged intermediate by the formation of the oxyanion hole signature appears at 80–82 (HGA). Active-site residues include S172 and D267.

The protein belongs to the 'GDXG' lipolytic enzyme family.

It catalyses the reaction dihydroprecondylocarpine acetate + NADPH = (+)-vincadifformine + acetate + NADP(+). The protein operates within alkaloid biosynthesis. Component of the seco-iridoid and derivatives monoterpenoid indole alkaloids (MIAs, e.g. vincadifformine) biosynthesis pathway. Catalyzes the conversion of O-acetylstemmadenine (OAS) to vincadifformine. May also trigger the formation of additional unknown MIAs. This Catharanthus roseus (Madagascar periwinkle) protein is Hydrolase 3.